Here is a 169-residue protein sequence, read N- to C-terminus: NAD(P)H-quinone oxidoreductase subunit J, chloroplastic (169 aa).

This sequence belongs to the complex I 30 kDa subunit family. As to quaternary structure, NDH is composed of at least 16 different subunits, 5 of which are encoded in the nucleus.

It localises to the plastid. It is found in the chloroplast thylakoid membrane. The catalysed reaction is a plastoquinone + NADH + (n+1) H(+)(in) = a plastoquinol + NAD(+) + n H(+)(out). It catalyses the reaction a plastoquinone + NADPH + (n+1) H(+)(in) = a plastoquinol + NADP(+) + n H(+)(out). Functionally, NDH shuttles electrons from NAD(P)H:plastoquinone, via FMN and iron-sulfur (Fe-S) centers, to quinones in the photosynthetic chain and possibly in a chloroplast respiratory chain. The immediate electron acceptor for the enzyme in this species is believed to be plastoquinone. Couples the redox reaction to proton translocation, and thus conserves the redox energy in a proton gradient. The chain is NAD(P)H-quinone oxidoreductase subunit J, chloroplastic from Marchantia polymorpha (Common liverwort).